A 556-amino-acid chain; its full sequence is MNVMQENQIKLIEHIKQGVVQAVGLEEAEVPEILLEVPKDKKHGDYSTNIAMQLARVAKKAPRQIAESIVPELKKDNKLIKEVEIAGPGFINFYLDNAYLTDLVPVILTEDKKYGESDFGKGEKFQIEFVSANPTGDLHLGHARGAAIGDSLANIMKMAGFDVSREYYINDAGNQINNLVLSAEARYFEALGLDSEFPEDGYRGADIISLGKDLAAKYGDKYVHTSEEERRSVFRVDALAFETGKLRADLEEFRVSFDEWFSETSLYEENKVLPALERLRENGYIYEQDGATWLRTTDFEDDKDRVLIKSDGSYTYFLPDIAYHLNKLERGFDVLIDIWGADHHGYIPRMRAAIEALGYSPNQLEVEIIQLVHLFEDGVQVKMSKRTGKSVTMRDLIEEVGLDATRYFFAMRSSDTHMNFDMSLAKSTSNDNPVYYVQYAHARISSILRSGKEQGLEVTKDADMSLLQTEAEYDLLKVLGEFADVVAEAATKRAPHRIVRYLNDLASSFHRFYNSNKVLDMDNLEVTKARLALIKTAQITLRNGLTLLGVSAPEKM.

Residues 132-142 (ANPTGDLHLGH) carry the 'HIGH' region motif.

This sequence belongs to the class-I aminoacyl-tRNA synthetase family. Monomer.

It localises to the cytoplasm. The enzyme catalyses tRNA(Arg) + L-arginine + ATP = L-arginyl-tRNA(Arg) + AMP + diphosphate. In Listeria monocytogenes serotype 4b (strain CLIP80459), this protein is Arginine--tRNA ligase.